The following is a 592-amino-acid chain: MNVYESLQTVLLFVVLLAMVKPLGTFMARVFQGERTILSPVLAPAESLLYGVCGVNSEEEMDWKRYARAMVLFNLVIFATLFAMLMLQHLLPLNPQKFPAFSWQLALNTAVSFTTNTNWQAYAGEQAASYFTQMVGLTVHNFVSAATGIAVAIAVIRGFARRTTSALGNFWVDLTRATLYILVPISLIAALVLVSQGVIQNFSAYQAVSLVQPVTYDTPKRDGTGSPVKDPTGNPVTERVTAKEVTIPMGPVASQEAIKELGTNGGGFFNANSAHPFENPTPLSNMLEILLILLIPFSLTYTFGAMVGNTRQGWTLLGVMLLILLASFAVLQGVESGGNPLVTKLGVHGANMEGKDTRFGLAGSSLFTVATTGTSCGAVNTMHDSLTPIGGMIPMSLMLLGELVPGGVGSGLYTMLAFAVIAVFVSGLMIGRTPEYLGKKIEVREMWMSVVTVLAAGVMVLILSGIAMISPSAVAAMANPGAHGLSEVLYAFASMANNNGSAFAGLSANTTFYNILGALAMIVGRFAPAVAVLAMAGSLAEKKYVPPSLGTLPTDKVPFALWLTLVILIVGALTFFPALSLGPIVEHLTMTM.

11 helical membrane passes run 7–27, 71–91, 136–156, 179–199, 287–307, 314–334, 411–431, 449–469, 473–493, 515–535, and 559–579; these read LQTVLLFVVLLAMVKPLGTFM, VLFNLVIFATLFAMLMLQHLL, GLTVHNFVSAATGIAVAIAVI, LYILVPISLIAALVLVSQGVI, LEILLILLIPFSLTYTFGAMV, WTLLGVMLLILLASFAVLQGV, GLYTMLAFAVIAVFVSGLMIG, SVVTVLAAGVMVLILSGIAMI, AVAAMANPGAHGLSEVLYAFA, ILGALAMIVGRFAPAVAVLAM, and FALWLTLVILIVGALTFFPAL.

Belongs to the KdpA family. The system is composed of three essential subunits: KdpA, KdpB and KdpC.

The protein resides in the cell inner membrane. Functionally, part of the high-affinity ATP-driven potassium transport (or Kdp) system, which catalyzes the hydrolysis of ATP coupled with the electrogenic transport of potassium into the cytoplasm. This subunit binds the periplasmic potassium ions and delivers the ions to the membrane domain of KdpB through an intramembrane tunnel. This chain is Potassium-transporting ATPase potassium-binding subunit, found in Geobacter sulfurreducens (strain ATCC 51573 / DSM 12127 / PCA).